The sequence spans 968 residues: Leucine--tRNA ligase (968 aa).

The span at 1–13 (MTETPTGTQSSRE) shows a compositional bias: polar residues. The interval 1–22 (MTETPTGTQSSRETAADDTPRH) is disordered. The 'HIGH' region signature appears at 75–86 (PYPSGEGLHVGH). A 'KMSKS' region motif is present at residues 741–745 (KIGKS). Residue Lys-744 participates in ATP binding.

It belongs to the class-I aminoacyl-tRNA synthetase family.

It localises to the cytoplasm. The catalysed reaction is tRNA(Leu) + L-leucine + ATP = L-leucyl-tRNA(Leu) + AMP + diphosphate. This is Leucine--tRNA ligase from Mycolicibacterium vanbaalenii (strain DSM 7251 / JCM 13017 / BCRC 16820 / KCTC 9966 / NRRL B-24157 / PYR-1) (Mycobacterium vanbaalenii).